Reading from the N-terminus, the 495-residue chain is UDP-glycosyltransferase 73C13 (495 aa).

His24 acts as the Proton acceptor in catalysis. His24 lines the an anthocyanidin pocket. Asp129 (charge relay) is an active-site residue. Residues Ala356, Gln358, His373, Trp376, Asn377, Ser378, and Glu381 each coordinate UDP-alpha-D-glucose. Ala396 is a binding site for an anthocyanidin. Asp397 and Gln398 together coordinate UDP-alpha-D-glucose.

The protein belongs to the UDP-glycosyltransferase family.

It catalyses the reaction oleanolate + UDP-alpha-D-glucose = oleanolate 3-O-beta-D-glucoside + UDP + H(+). In terms of biological role, catalyzes the transfer of a glucose (Glc) moiety from UDP-Glc to the C-3 position of the oleanane sapogenins oleanolate and hederagenin, and to the C-28 carboxylic group of the lupane sapogenin betulinate. The monoglucosylated hederagenin 3-O-beta-D-glucoside is a feeding deterrent of the yellow-striped flea beetle (Phyllotreta nemorum). The sequence is that of UDP-glycosyltransferase 73C13 from Barbarea vulgaris (Yellow rocket).